A 1123-amino-acid polypeptide reads, in one-letter code: Telomerase reverse transcriptase (1123 aa).

Disordered stretches follow at residues 191–242 and 410–439; these read ENKR…KTTK and GTTS…PKCP. The segment covering 201 to 210 has biased composition (polar residues); the sequence is QPPTKRQWLS. In terms of domain architecture, Reverse transcriptase spans 596–929; that stretch reads LVDDAEAESS…PFVRWTGLLI (334 aa). Positions 691, 860, and 861 each coordinate Mg(2+).

This sequence belongs to the reverse transcriptase family. Telomerase subfamily. As to quaternary structure, component of the telomerase ribonucleoprotein complex. Interacts with POT1A.

It is found in the nucleus. The protein resides in the chromosome. It localises to the telomere. It catalyses the reaction DNA(n) + a 2'-deoxyribonucleoside 5'-triphosphate = DNA(n+1) + diphosphate. In terms of biological role, telomerase is a ribonucleoprotein enzyme essential for the replication of chromosome termini in most eukaryotes. It elongates telomeres. It is a reverse transcriptase that adds simple sequence repeats to chromosome ends by copying a template sequence within the RNA component of the enzyme. Required to prevent genome instability induced by breakage-fusion-bridge (BFB) cycles. Can extend completely non-telomeric sequences using RNA template in vitro. This Arabidopsis thaliana (Mouse-ear cress) protein is Telomerase reverse transcriptase (TERT).